Consider the following 425-residue polypeptide: Multifunctional CCA protein (425 aa).

Residues Gly-8 and Arg-11 each contribute to the ATP site. CTP is bound by residues Gly-8 and Arg-11. 2 residues coordinate Mg(2+): Asp-21 and Asp-23. Arg-91, Arg-141, and Arg-144 together coordinate ATP. Residues Arg-91, Arg-141, and Arg-144 each coordinate CTP. Residues 230-331 (TGVHLMMVLD…VRLLERCDAI (102 aa)) form the HD domain.

It belongs to the tRNA nucleotidyltransferase/poly(A) polymerase family. Bacterial CCA-adding enzyme type 1 subfamily. Monomer. Can also form homodimers and oligomers. Mg(2+) is required as a cofactor. It depends on Ni(2+) as a cofactor.

It catalyses the reaction a tRNA precursor + 2 CTP + ATP = a tRNA with a 3' CCA end + 3 diphosphate. It carries out the reaction a tRNA with a 3' CCA end + 2 CTP + ATP = a tRNA with a 3' CCACCA end + 3 diphosphate. Catalyzes the addition and repair of the essential 3'-terminal CCA sequence in tRNAs without using a nucleic acid template. Adds these three nucleotides in the order of C, C, and A to the tRNA nucleotide-73, using CTP and ATP as substrates and producing inorganic pyrophosphate. tRNA 3'-terminal CCA addition is required both for tRNA processing and repair. Also involved in tRNA surveillance by mediating tandem CCA addition to generate a CCACCA at the 3' terminus of unstable tRNAs. While stable tRNAs receive only 3'-terminal CCA, unstable tRNAs are marked with CCACCA and rapidly degraded. The protein is Multifunctional CCA protein of Acidovorax sp. (strain JS42).